We begin with the raw amino-acid sequence, 540 residues long: Chaperonin GroEL (540 aa).

ATP contacts are provided by residues 29–32, 86–90, Gly-413, 476–478, and Asp-492; these read TLGP, DGTTT, and NAA.

Belongs to the chaperonin (HSP60) family. In terms of assembly, forms a cylinder of 14 subunits composed of two heptameric rings stacked back-to-back. Interacts with the co-chaperonin GroES.

Its subcellular location is the cytoplasm. The catalysed reaction is ATP + H2O + a folded polypeptide = ADP + phosphate + an unfolded polypeptide.. In terms of biological role, together with its co-chaperonin GroES, plays an essential role in assisting protein folding. The GroEL-GroES system forms a nano-cage that allows encapsulation of the non-native substrate proteins and provides a physical environment optimized to promote and accelerate protein folding. The protein is Chaperonin GroEL of Streptococcus anginosus.